The following is a 1584-amino-acid chain: Cilia- and flagella-associated protein 74 (1584 aa).

A coiled-coil region spans residues 300–379 (RKFQAWDRAK…EAEEEKRKKQ (80 aa)). Over residues 692 to 706 (SEQQLEGTESSQADM) the composition is skewed to polar residues. The tract at residues 692-739 (SEQQLEGTESSQADMQSRKELEKLDKEQEEEQPAEPERLTTVIPPSEE) is disordered. Residues 707 to 717 (QSRKELEKLDK) are compositionally biased toward basic and acidic residues.

This sequence belongs to the CFAP74 family.

It localises to the cytoplasm. The protein resides in the cytoskeleton. Its subcellular location is the cilium axoneme. The protein localises to the flagellum axoneme. In terms of biological role, as part of the central apparatus of the cilium axoneme may play a role in cilium movement. May play an important role in sperm architecture and function. This chain is Cilia- and flagella-associated protein 74, found in Homo sapiens (Human).